Here is a 142-residue protein sequence, read N- to C-terminus: MAKKVTGYLKLQVPAGAANPSPPIGPALGQRGLNIMEFCKAFNAQTQKEEKNTPIPVVITIYADRSFTFEMKTPPMSFFLKQAAKIQSGSKLPGRDSAGKVTSAQVREIAEKKMKDLNCDSIESAMRMVEGSARSMGLQVEG.

Belongs to the universal ribosomal protein uL11 family. Part of the ribosomal stalk of the 50S ribosomal subunit. Interacts with L10 and the large rRNA to form the base of the stalk. L10 forms an elongated spine to which L12 dimers bind in a sequential fashion forming a multimeric L10(L12)X complex. One or more lysine residues are methylated.

Its function is as follows. Forms part of the ribosomal stalk which helps the ribosome interact with GTP-bound translation factors. The polypeptide is Large ribosomal subunit protein uL11 (Rhodopseudomonas palustris (strain HaA2)).